The chain runs to 463 residues: Probable glycosyltransferase 3 (463 aa).

Residues 1–24 (MAVTGGGRPAVRQQAARGKQMQRT) are Cytoplasmic-facing. Residues 25–47 (FNNVKITLICGFITLLVLRGTVG) traverse the membrane as a helical; Signal-anchor for type II membrane protein segment. At 48–463 (INLLTYGVGG…ALKMDAKIES (416 aa)) the chain is on the lumenal side. Residues 82 to 125 (EIRSDTDDDDDDEEEEPLGVDASTTTTTNSTTTTATAARRRSSN) are disordered. The segment covering 87–99 (TDDDDDDEEEEPL) has biased composition (acidic residues). Positions 103–118 (ASTTTTTNSTTTTATA) are enriched in low complexity. Asn110, Asn125, and Asn442 each carry an N-linked (GlcNAc...) asparagine glycan.

This sequence belongs to the glycosyltransferase 34 family.

It localises to the golgi apparatus membrane. Probable glycosyltransferase that may be involved in the biosynthesis of xyloglucan. In Oryza sativa subsp. japonica (Rice), this protein is Probable glycosyltransferase 3.